The primary structure comprises 533 residues: GMP synthase [glutamine-hydrolyzing] (533 aa).

A Glutamine amidotransferase type-1 domain is found at 25-215; sequence SIVIFDFGSQ…VFNICKCHAN (191 aa). Cysteine 102 acts as the Nucleophile in catalysis. Catalysis depends on residues histidine 189 and glutamate 191. Residues 216–408 enclose the GMPS ATP-PPase domain; it reads WTMGNYIQES…LGLPDEMIWR (193 aa). Position 243-249 (243-249) interacts with ATP; it reads SGGVDSA.

As to quaternary structure, homodimer.

The enzyme catalyses XMP + L-glutamine + ATP + H2O = GMP + L-glutamate + AMP + diphosphate + 2 H(+). Its pathway is purine metabolism; GMP biosynthesis; GMP from XMP (L-Gln route): step 1/1. Its function is as follows. Catalyzes the synthesis of GMP from XMP. The protein is GMP synthase [glutamine-hydrolyzing] of Dehalococcoides mccartyi (strain CBDB1).